Here is a 439-residue protein sequence, read N- to C-terminus: GTPase Der (439 aa).

2 EngA-type G domains span residues 3-167 (PLVA…PKSS) and 176-351 (TRIA…AQYS). Residues 9 to 16 (GRPNVGKS), 56 to 60 (DTGGF), 119 to 122 (NKVD), 182 to 189 (GRPNVGKS), 229 to 233 (DTAGI), and 294 to 297 (NKWD) each bind GTP. The KH-like domain maps to 352–436 (KRVSTSDLNR…PLKIIFRGRD (85 aa)).

It belongs to the TRAFAC class TrmE-Era-EngA-EngB-Septin-like GTPase superfamily. EngA (Der) GTPase family. Associates with the 50S ribosomal subunit.

Functionally, GTPase that plays an essential role in the late steps of ribosome biogenesis. This chain is GTPase Der, found in Geobacter metallireducens (strain ATCC 53774 / DSM 7210 / GS-15).